A 188-amino-acid polypeptide reads, in one-letter code: MNMTKGALILSLSFLLAACSSIPQNIKGNNQPDIQKSFVAVHNQPGLYVGQQARFGGKVINVINGKTDTLLEISVLPLDSYAKPDIEANYQGRLLARQSGFLDPVNYRNHFVTILGTIQGEQPGFINKVPYNFLEVNMQGIQVWHLREVVNTTYNLWDYGYGAFWPEPGWGAPYYTNAVSQVTPELVK.

The N-terminal stretch at 1–18 (MNMTKGALILSLSFLLAA) is a signal peptide. A lipid anchor (N-palmitoyl cysteine) is attached at C19. A lipid anchor (S-diacylglycerol cysteine) is attached at C19.

In terms of assembly, forms homooligomers.

Its subcellular location is the cell outer membrane. Its function is as follows. The induction of Slp may help to stabilize the outer membrane during carbon starvation and stationary phase. This Escherichia coli (strain K12) protein is Outer membrane protein Slp (slp).